Here is a 62-residue protein sequence, read N- to C-terminus: UPF0434 protein NGR_c31900 (62 aa).

This sequence belongs to the UPF0434 family.

The chain is UPF0434 protein NGR_c31900 from Sinorhizobium fredii (strain NBRC 101917 / NGR234).